We begin with the raw amino-acid sequence, 185 residues long: MAPKGSSKQQSEEDLLLQDFSRNLSAKSSALFFGNAFIVSAIPIWLYWRIWHMDLIQSAVLYSVMTLVSTYLVAFAYKNVKFVLKHKVAQKREDAVSKEVTRKLSEADNRKMSRKEKDERILWKKNEVADYEATTFSIFYNNTLFLVVVIVASFFILKNFNPTVNYILSISASSGLIALLSTGSK.

An N-acetylmethionine modification is found at M1. At 1–27 the chain is on the lumenal side; the sequence is MAPKGSSKQQSEEDLLLQDFSRNLSAK. A phosphoserine mark is found at S7 and S11. Residues 28–48 traverse the membrane as a helical segment; that stretch reads SSALFFGNAFIVSAIPIWLYW. Residues 49-54 are Cytoplasmic-facing; the sequence is RIWHMD. A helical membrane pass occupies residues 55-76; sequence LIQSAVLYSVMTLVSTYLVAFA. At 77 to 135 the chain is on the lumenal side; sequence YKNVKFVLKHKVAQKREDAVSKEVTRKLSEADNRKMSRKEKDERILWKKNEVADYEATT. The residue at position 105 (S105) is a Phosphoserine. The chain crosses the membrane as a helical span at residues 136-157; the sequence is FSIFYNNTLFLVVVIVASFFIL. Topologically, residues 158 to 163 are cytoplasmic; sequence KNFNPT. Residues 164–184 traverse the membrane as a helical segment; it reads VNYILSISASSGLIALLSTGS.

This sequence belongs to the TRAP-gamma family. As to quaternary structure, heterotetramer of TRAP-alpha, TRAP-beta, TRAP-delta and TRAP-gamma.

The protein localises to the endoplasmic reticulum membrane. TRAP proteins are part of a complex whose function is to bind calcium to the ER membrane and thereby regulate the retention of ER resident proteins. This chain is Translocon-associated protein subunit gamma (SSR3), found in Homo sapiens (Human).